Consider the following 252-residue polypeptide: Imidazole glycerol phosphate synthase subunit HisF (252 aa).

Active-site residues include Asp11 and Asp130.

The protein belongs to the HisA/HisF family. Heterodimer of HisH and HisF.

The protein localises to the cytoplasm. The catalysed reaction is 5-[(5-phospho-1-deoxy-D-ribulos-1-ylimino)methylamino]-1-(5-phospho-beta-D-ribosyl)imidazole-4-carboxamide + L-glutamine = D-erythro-1-(imidazol-4-yl)glycerol 3-phosphate + 5-amino-1-(5-phospho-beta-D-ribosyl)imidazole-4-carboxamide + L-glutamate + H(+). The protein operates within amino-acid biosynthesis; L-histidine biosynthesis; L-histidine from 5-phospho-alpha-D-ribose 1-diphosphate: step 5/9. Its function is as follows. IGPS catalyzes the conversion of PRFAR and glutamine to IGP, AICAR and glutamate. The HisF subunit catalyzes the cyclization activity that produces IGP and AICAR from PRFAR using the ammonia provided by the HisH subunit. The chain is Imidazole glycerol phosphate synthase subunit HisF from Petrotoga mobilis (strain DSM 10674 / SJ95).